The primary structure comprises 180 residues: Endoribonuclease YbeY (180 aa).

Residues His136, His140, and His146 each contribute to the Zn(2+) site.

Belongs to the endoribonuclease YbeY family. The cofactor is Zn(2+).

It localises to the cytoplasm. Single strand-specific metallo-endoribonuclease involved in late-stage 70S ribosome quality control and in maturation of the 3' terminus of the 16S rRNA. This chain is Endoribonuclease YbeY, found in Synechococcus sp. (strain CC9902).